A 298-amino-acid polypeptide reads, in one-letter code: GTPase Era (298 aa).

The Era-type G domain occupies 3 to 170; that stretch reads KSGFVAILGR…VQLLKDNLEE (168 aa). Residues 11–18 form a G1 region; that stretch reads GRPNVGKS. GTP is bound at residue 11–18; it reads GRPNVGKS. A G2 region spans residues 37-41; the sequence is QTTRN. The G3 stretch occupies residues 58-61; that stretch reads DTPG. GTP-binding positions include 58–62 and 120–123; these read DTPGI and NKID. The interval 120 to 123 is G4; it reads NKID. Residues 149-151 form a G5 region; it reads ISA. The region spanning 201–279 is the KH type-2 domain; that stretch reads TQQEVPHSVA…YLETWVKVKK (79 aa).

It belongs to the TRAFAC class TrmE-Era-EngA-EngB-Septin-like GTPase superfamily. Era GTPase family. Monomer.

It localises to the cytoplasm. It is found in the cell membrane. In terms of biological role, an essential GTPase that binds both GDP and GTP, with rapid nucleotide exchange. Plays a role in 16S rRNA processing and 30S ribosomal subunit biogenesis and possibly also in cell cycle regulation and energy metabolism. This is GTPase Era from Streptococcus equi subsp. zooepidemicus (strain MGCS10565).